Consider the following 140-residue polypeptide: uncharacterized protein (140 aa).

The span at 1–19 (MGLCGSKTQPMPSQTTTVA) shows a compositional bias: polar residues. Residues 1–140 (MGLCGSKTQP…ERERENMIYD (140 aa)) form a disordered region. Residue Gly-2 is the site of N-myristoyl glycine attachment. Residue Cys-4 is the site of S-palmitoyl cysteine attachment. Residues 27–40 (INRDTVKSKQELRH) are compositionally biased toward basic and acidic residues. Over residues 41–51 (KEKKDKKKKTQ) the composition is skewed to basic residues. Residues 73-140 (DPSKNKVSPK…ERERENMIYD (68 aa)) are compositionally biased toward basic and acidic residues.

To S.pombe new13. Myristoylated. In terms of processing, the N-myristoylated protein is further palmitoylated by ERF2, PFA4 and slightly by PFA5, but not by PFA3.

The protein localises to the cytoplasm. The protein resides in the cytosol. This is an uncharacterized protein from Saccharomyces cerevisiae (strain ATCC 204508 / S288c) (Baker's yeast).